Reading from the N-terminus, the 291-residue chain is Taste receptor type 2 member 16 (291 aa).

Met-1 is a topological domain (extracellular). A helical membrane pass occupies residues 2–22 (IPIQLTVFFMIIYVLESLTII). Over 23-41 (VQSSLIVAVLGREWLQVRR) the chain is Cytoplasmic. The helical transmembrane segment at 42–62 (LMPVDMILISLGISRFCLQWA) threads the bilayer. The Extracellular portion of the chain corresponds to 63–84 (SMLNNFCSYLNLNYVLCNLTIT). Residue Asn-80 is glycosylated (N-linked (GlcNAc...) asparagine). The chain crosses the membrane as a helical span at residues 85–105 (WEFFNILTFWLNSLLTVFYCI). At 106 to 125 (KVSSFTHHIFLWVRWRILRW) the chain is on the cytoplasmic side. The helical transmembrane segment at 126-146 (FPWILLGSLTIACVTIIPSAI) threads the bilayer. The Extracellular segment spans residues 147–182 (GNYIQIQLLTMEHLPRNSTVTDRLEKFHQYQFQSHT). Asn-163 is a glycosylation site (N-linked (GlcNAc...) asparagine). The chain crosses the membrane as a helical span at residues 183-203 (VALVIPFILFLASTILLMASL). The Cytoplasmic segment spans residues 204 to 228 (TKQIQHHSTGHCNPSMKAHFTALRS). Residues 229–249 (LAILFIVFTSYFLIILITIIG) traverse the membrane as a helical segment. The Extracellular portion of the chain corresponds to 250–257 (TLFDKRCW). Residues 258-278 (LWVWEAFVYAFILMHSTSLML) traverse the membrane as a helical segment. The Cytoplasmic segment spans residues 279–291 (SSPTLKRILKGKC).

This sequence belongs to the G-protein coupled receptor T2R family. As to quaternary structure, interacts with RTP3 and RTP4.

It is found in the cell membrane. In terms of biological role, receptor that may play a role in the perception of bitterness and is gustducin-linked. May function as a bitter taste receptor for the phytonutrient beta glucopyranosides, some of which are toxic and some of which lower the risk of cancer and cardiovascular disease. The activity of this receptor may stimulate alpha gustducin, mediate PLC-beta-2 activation and lead to the gating of TRPM5. This is Taste receptor type 2 member 16 (TAS2R16) from Pongo pygmaeus (Bornean orangutan).